Reading from the N-terminus, the 327-residue chain is Endo-1,4-beta-xylanase A (327 aa).

The GH10 domain occupies 1–323; sequence AASGLEAAMK…KPSYTSTLNT (323 aa). An intrachain disulfide couples cysteine 81 to cysteine 123. An N-linked (GlcNAc...) asparagine glycan is attached at asparagine 101. The active-site Proton donor is glutamate 131. The active-site Nucleophile is the glutamate 245. Residues cysteine 273 and cysteine 279 are joined by a disulfide bond.

The protein belongs to the glycosyl hydrolase 10 (cellulase F) family. In terms of assembly, monomer.

Its subcellular location is the secreted. It is found in the extracellular space. It carries out the reaction Endohydrolysis of (1-&gt;4)-beta-D-xylosidic linkages in xylans.. The protein operates within glycan degradation; xylan degradation. Functionally, catalyzes the hydrolysis of the internal glycosidic bonds in heteroxylans, releasing mainly xylobiose and xylotriose. Most active on oat-spelt xylan. This is Endo-1,4-beta-xylanase A from Fusarium oxysporum f. sp. lycopersici (strain 4287 / CBS 123668 / FGSC 9935 / NRRL 34936) (Fusarium vascular wilt of tomato).